The sequence spans 281 residues: Probable ABC transporter ATP-binding protein AZC_3926 (281 aa).

A disordered region spans residues 1-38 (MNVLSMFGRNATRETSSPAATAGRYADEGDWEGDDHQP). An ABC transporter domain is found at 45–277 (LAAFGLAKSY…PDVRRLYLGE (233 aa)). Position 77–84 (77–84 (GPNGAGKT)) interacts with ATP.

This sequence belongs to the ABC transporter superfamily.

The polypeptide is Probable ABC transporter ATP-binding protein AZC_3926 (Azorhizobium caulinodans (strain ATCC 43989 / DSM 5975 / JCM 20966 / LMG 6465 / NBRC 14845 / NCIMB 13405 / ORS 571)).